The sequence spans 867 residues: 2-methylcitrate dehydratase (2-methyl-trans-aconitate forming) (867 aa).

Residues C410, C476, and C479 each coordinate [4Fe-4S] cluster.

It belongs to the aconitase/IPM isomerase family. [4Fe-4S] cluster is required as a cofactor.

It carries out the reaction (2S,3S)-2-methylcitrate = 2-methyl-trans-aconitate + H2O. The enzyme catalyses citrate = D-threo-isocitrate. It functions in the pathway organic acid metabolism; propanoate degradation. Its activity is regulated as follows. Inhibited by ferricyanide and EDTA. Functionally, involved in the catabolism of short chain fatty acids (SCFA) via the 2-methylcitrate cycle II (propionate degradation route). In vivo under anaerobic conditions, AcnD catalyzes the stereospecific dehydration of (2S,3S)-methylcitrate (2-MC) to yield the trans isomer of 2-methyl-aconitate (2-MCA). AcnD can also accept citrate and cis-aconitate, but with a lower efficiency. 2-methylisocitrate and isocitrate are not substrates. This chain is 2-methylcitrate dehydratase (2-methyl-trans-aconitate forming) (acnD), found in Shewanella oneidensis (strain ATCC 700550 / JCM 31522 / CIP 106686 / LMG 19005 / NCIMB 14063 / MR-1).